A 101-amino-acid chain; its full sequence is RNA-binding protein Hfq (101 aa).

The 60-residue stretch at 9-68 (DPFLNALRRERVPVSIYLVNGIKLQGQVESFDQFVILLKNTVSQMVYKHAISTVVPSRPV) folds into the Sm domain. The disordered stretch occupies residues 63–101 (VPSRPVSHHSNNPSGSTNNYHGSNPSAPQQPQQDSDDAE). Polar residues predominate over residues 70–86 (HHSNNPSGSTNNYHGSN).

It belongs to the Hfq family. Homohexamer.

Its function is as follows. RNA chaperone that binds small regulatory RNA (sRNAs) and mRNAs to facilitate mRNA translational regulation in response to envelope stress, environmental stress and changes in metabolite concentrations. Also binds with high specificity to tRNAs. Positively regulates the expression of the yst gene for heat-stable enterotoxin (Y-ST). This is RNA-binding protein Hfq from Yersinia enterocolitica.